Here is a 393-residue protein sequence, read N- to C-terminus: Digeranylgeranylglycerophospholipid reductase (393 aa).

Positions 13, 32, 43, 44, 46, 95, 119, 274, and 286 each coordinate FAD. Residues Arg-327 and Gly-363 each contribute to the a 2,3-bis-O-(geranylgeranyl)-sn-glycerol 1-phospholipid site.

It belongs to the geranylgeranyl reductase family. DGGGPL reductase subfamily. The cofactor is FAD.

The enzyme catalyses a 2,3-bis-O-phytanyl-sn-glycerol 1-phospholipid + 8 A = a 2,3-bis-O-(geranylgeranyl)-sn-glycerol 1-phospholipid + 8 AH2. The catalysed reaction is 2,3-bis-O-(phytanyl)-sn-glycerol 1-phosphate + 8 A = 2,3-bis-O-(geranylgeranyl)-sn-glycerol 1-phosphate + 8 AH2. It catalyses the reaction CDP-2,3-bis-O-(geranylgeranyl)-sn-glycerol + 8 AH2 = CDP-2,3-bis-O-(phytanyl)-sn-glycerol + 8 A. It carries out the reaction archaetidylserine + 8 AH2 = 2,3-bis-O-phytanyl-sn-glycero-3-phospho-L-serine + 8 A. It participates in membrane lipid metabolism; glycerophospholipid metabolism. In terms of biological role, is involved in the reduction of 2,3-digeranylgeranylglycerophospholipids (unsaturated archaeols) into 2,3-diphytanylglycerophospholipids (saturated archaeols) in the biosynthesis of archaeal membrane lipids. Catalyzes the formation of archaetidic acid (2,3-di-O-phytanyl-sn-glyceryl phosphate) from 2,3-di-O-geranylgeranylglyceryl phosphate (DGGGP) via the hydrogenation of each double bond of the isoprenoid chains. Is also probably able to reduce double bonds of geranyl groups in CDP-2,3-bis-O-(geranylgeranyl)-sn-glycerol and archaetidylserine, thus acting at various stages in the biosynthesis of archaeal membrane lipids. The chain is Digeranylgeranylglycerophospholipid reductase from Pyrococcus horikoshii (strain ATCC 700860 / DSM 12428 / JCM 9974 / NBRC 100139 / OT-3).